Consider the following 361-residue polypeptide: UDP-N-acetylglucosamine--N-acetylmuramyl-(pentapeptide) pyrophosphoryl-undecaprenol N-acetylglucosamine transferase (361 aa).

UDP-N-acetyl-alpha-D-glucosamine is bound by residues 12 to 14 (TGG), N123, R166, S192, and Q293.

Belongs to the glycosyltransferase 28 family. MurG subfamily.

The protein localises to the cell inner membrane. It carries out the reaction di-trans,octa-cis-undecaprenyl diphospho-N-acetyl-alpha-D-muramoyl-L-alanyl-D-glutamyl-meso-2,6-diaminopimeloyl-D-alanyl-D-alanine + UDP-N-acetyl-alpha-D-glucosamine = di-trans,octa-cis-undecaprenyl diphospho-[N-acetyl-alpha-D-glucosaminyl-(1-&gt;4)]-N-acetyl-alpha-D-muramoyl-L-alanyl-D-glutamyl-meso-2,6-diaminopimeloyl-D-alanyl-D-alanine + UDP + H(+). It participates in cell wall biogenesis; peptidoglycan biosynthesis. Its function is as follows. Cell wall formation. Catalyzes the transfer of a GlcNAc subunit on undecaprenyl-pyrophosphoryl-MurNAc-pentapeptide (lipid intermediate I) to form undecaprenyl-pyrophosphoryl-MurNAc-(pentapeptide)GlcNAc (lipid intermediate II). This chain is UDP-N-acetylglucosamine--N-acetylmuramyl-(pentapeptide) pyrophosphoryl-undecaprenol N-acetylglucosamine transferase, found in Caulobacter vibrioides (strain ATCC 19089 / CIP 103742 / CB 15) (Caulobacter crescentus).